A 247-amino-acid polypeptide reads, in one-letter code: MPCCPTKSGAAPTNRNYELQGEMLKDIGGMQTYFTGKRSSKVVLIGFMDVFGLSKQIKEGADQLANHELAIYLPDFLNGETASIEMIDPKTIEQKEARSKFMEKISSPLHWPKLTKVIEDIERIHGQDVKIGAYGFCWGAKVLITYPNKERFLRIGCAHPSLLDPVDAKHVHCPVCFLCSKDEDPEEVDAWKKSFENSPYFSESYFETFGKMHHGWMAARANLSDPENRKYFDLGYQIFLKFFKELF.

This sequence belongs to the AIM2 family.

The protein localises to the cytoplasm. It is found in the nucleus. This is an uncharacterized protein from Schizosaccharomyces pombe (strain 972 / ATCC 24843) (Fission yeast).